The following is a 549-amino-acid chain: Cytoplasmic trehalase (549 aa).

Substrate is bound by residues R168, 175 to 176 (WD), N212, 221 to 223 (RSQ), 292 to 294 (RDE), and G324. Active-site proton donor/acceptor residues include D326 and E509. E525 lines the substrate pocket.

It belongs to the glycosyl hydrolase 37 family. As to quaternary structure, monomer.

It localises to the cytoplasm. The catalysed reaction is alpha,alpha-trehalose + H2O = alpha-D-glucose + beta-D-glucose. Its pathway is glycan degradation; trehalose degradation; D-glucose from alpha,alpha-trehalose: step 1/1. Functionally, hydrolyzes trehalose to glucose. Could be involved, in cells returning to low osmolarity conditions, in the utilization of the accumulated cytoplasmic trehalose, which was synthesized in response to high osmolarity. The sequence is that of Cytoplasmic trehalase from Escherichia coli O139:H28 (strain E24377A / ETEC).